Here is a 135-residue protein sequence, read N- to C-terminus: HTH-type transcriptional activator AarP (135 aa).

Positions 22 to 120 (SEILVWIEGN…GISPSLYRLS (99 aa)) constitute an HTH araC/xylS-type domain. 2 consecutive DNA-binding regions (H-T-H motif) follow at residues 39 to 60 (DDIA…RKIV) and 87 to 110 (VIDI…KAYL).

In terms of biological role, transcriptional activator of 2'-N-acetyltransferase. This is HTH-type transcriptional activator AarP (aarP) from Providencia stuartii.